Consider the following 676-residue polypeptide: E3 ubiquitin-protein ligase ICP0 (676 aa).

An RING-type zinc finger spans residues 13-52 (CCICLDAITGAARALPCLHAFCLACIRRWLEGRPTCPLCK). 3 disordered regions span residues 101–135 (DLTA…EAAG), 266–486 (HLIP…PAPI), and 555–676 (AAIS…AWRQ). Gly residues predominate over residues 110–135 (PGAGGEAGAAGGSEAGGGAGGAEAAG). Residues 286–303 (SDSDSEGSEDDSWSESEE) are compositionally biased toward acidic residues. Low complexity predominate over residues 304-314 (SSSGLSTSDLT). Residues 315–328 (AIDDTETEPETDAE) show a composition bias toward acidic residues. A compositionally biased stretch (polar residues) spans 351-361 (YVSTRGRQTPA). Low complexity-rich tracts occupy residues 375–388 (GRAA…SSRS) and 397–411 (LPAA…QARA). Gly residues predominate over residues 422 to 439 (GAGLGVAAGETAGWGVGS). The segment covering 440–450 (EEGRGERRAKL) has biased composition (basic and acidic residues). Residues 474 to 484 (TPAPAPAPAPA) are compositionally biased toward pro residues. Residues 555-597 (AAISTRAPTPSPAGRAPAADPRRAGAPALAGAARAEAGRNGNP) are compositionally biased toward low complexity.

In terms of processing, auto-ubiquitinated. The strongly acidic region might serve as a transcriptional activation domain, possibly regulated through phosphorylation by casein kinase II.

It carries out the reaction S-ubiquitinyl-[E2 ubiquitin-conjugating enzyme]-L-cysteine + [acceptor protein]-L-lysine = [E2 ubiquitin-conjugating enzyme]-L-cysteine + N(6)-ubiquitinyl-[acceptor protein]-L-lysine.. In terms of biological role, evades nuclear antiviral defenses triggered by dsDNA viruses. Acts during the initial stages of lytic infection and the reactivation of latent viral genome. Prevents the antiviral effect of nuclear bodies by degrading host PML and SP100. This chain is E3 ubiquitin-protein ligase ICP0 (BICP0), found in Bos taurus (Bovine).